The chain runs to 235 residues: Small ribosomal subunit protein uS3 (235 aa).

The KH type-2 domain occupies 39-107 (VRKFLLGQLS…PTKLNISEIR (69 aa)).

This sequence belongs to the universal ribosomal protein uS3 family. Part of the 30S ribosomal subunit. Forms a tight complex with proteins S10 and S14.

Its function is as follows. Binds the lower part of the 30S subunit head. Binds mRNA in the 70S ribosome, positioning it for translation. The chain is Small ribosomal subunit protein uS3 from Blochmanniella floridana.